We begin with the raw amino-acid sequence, 39 residues long: Adipokinetic prohormone type 2 (39 aa).

A Pyrrolidone carboxylic acid modification is found at Gln1. Trp8 carries the post-translational modification Tryptophan amide.

This sequence belongs to the AKH/HRTH/RPCH family. As to quaternary structure, adipokinetic hormone precursor-related peptide (APRP) can form three type of disulfide-bond dimers: p1 (alpha-alpha), p2 (alpha-beta), and p3 (beta-beta).

It localises to the secreted. In terms of biological role, this hormone, released from cells in the corpora cardiaca, causes release of diglycerides from the fat body and stimulation of muscles to use these diglycerides as an energy source during energy-demanding processes. The polypeptide is Adipokinetic prohormone type 2 (Schistocerca gregaria (Desert locust)).